A 180-amino-acid polypeptide reads, in one-letter code: MAVQALREELDSKCLQLLSDLEELEAKRAALNARVEEGWLSLAKARYAMGAKSVGPLQYASRMEPQVCVRASEAQDGPQTFRVIKADAQTPEEVGPSEASLRRRKGPTKTKELGSAVVPQDPLNWFGILVPHSLRQAQASFRDGLQLAADIASLQTRINWGQSQLRGLQKKLKELDPGPA.

Positions 4–38 (QALREELDSKCLQLLSDLEELEAKRAALNARVEEG) form a coiled coil. A disordered region spans residues 90 to 113 (TPEEVGPSEASLRRRKGPTKTKEL).

As to quaternary structure, accessory component of the multisubunit proton-transporting vacuolar (V)-ATPase protein pump. Predominantly expressed in the heart, liver, kidney and testis and at lower levels in the brain and lung. Undetectable in the spleen and muscles.

Its subcellular location is the endosome. It localises to the lysosome. The protein localises to the endoplasmic reticulum-Golgi intermediate compartment. It is found in the cytoplasmic vesicle. The protein resides in the COPI-coated vesicle. Its subcellular location is the endoplasmic reticulum. Functionally, accessory component of the proton-transporting vacuolar (V)-ATPase protein pump involved in intracellular iron homeostasis. In aerobic conditions, required for intracellular iron homeostasis, thus triggering the activity of Fe(2+) prolyl hydroxylase (PHD) enzymes, and leading to HIF1A hydroxylation and subsequent proteasomal degradation. Necessary for endolysosomal acidification and lysosomal degradation. May be involved in Golgi homeostasis. This Mus musculus (Mouse) protein is Vacuolar ATPase assembly protein VMA22 (Vma22).